The following is a 67-amino-acid chain: Large ribosomal subunit protein eL24 (67 aa).

Zn(2+) contacts are provided by Cys-7, Cys-10, Cys-33, and Cys-37. The C4-type zinc finger occupies 7–37; it reads CDYCGTDIEPGTGTMFVHKDGATTHFCSSKC. Basic and acidic residues predominate over residues 48 to 60; that stretch reads RNLEWTDTARGEA. Residues 48-67 are disordered; the sequence is RNLEWTDTARGEAGEAEDEA.

It belongs to the eukaryotic ribosomal protein eL24 family. In terms of assembly, part of the 50S ribosomal subunit. Forms a cluster with proteins L3 and L14. Requires Zn(2+) as cofactor.

Functionally, binds to the 23S rRNA. This Haloarcula marismortui (strain ATCC 43049 / DSM 3752 / JCM 8966 / VKM B-1809) (Halobacterium marismortui) protein is Large ribosomal subunit protein eL24 (rpl24e).